The sequence spans 427 residues: Neuronal pentraxin-2 (427 aa).

Residues 1 to 17 form the signal peptide; the sequence is MLALLAAGVAFAVVVLA. Asparagine 144 and asparagine 185 each carry an N-linked (GlcNAc...) asparagine glycan. In terms of domain architecture, Pentraxin (PTX) spans 219 to 420; the sequence is DAFKVSLPFR…GASKWPVETC (202 aa). The cysteines at positions 249 and 309 are disulfide-linked. Ca(2+)-binding residues include asparagine 273, glutamate 351, glutamine 352, aspartate 353, and glutamine 363. N-linked (GlcNAc...) asparagine glycosylation is present at asparagine 389.

In terms of assembly, homooligomer or heterooligomer (probably pentamer) with neuronal pentraxin receptor (NPTXR). Requires Ca(2+) as cofactor. Testis specific.

It localises to the cytoplasmic vesicle. The protein resides in the secretory vesicle. It is found in the acrosome lumen. Its function is as follows. May be involved in binding, concentrating, and sorting soluble glycoproteins or glycolipids that are destined for the acrosome. The protein is Neuronal pentraxin-2 (NPTX2) of Cavia porcellus (Guinea pig).